A 226-amino-acid chain; its full sequence is Biosynthetic peptidoglycan transglycosylase (226 aa).

The helical transmembrane segment at Phe-8–Leu-28 threads the bilayer.

This sequence belongs to the glycosyltransferase 51 family.

The protein localises to the cell inner membrane. The catalysed reaction is [GlcNAc-(1-&gt;4)-Mur2Ac(oyl-L-Ala-gamma-D-Glu-L-Lys-D-Ala-D-Ala)](n)-di-trans,octa-cis-undecaprenyl diphosphate + beta-D-GlcNAc-(1-&gt;4)-Mur2Ac(oyl-L-Ala-gamma-D-Glu-L-Lys-D-Ala-D-Ala)-di-trans,octa-cis-undecaprenyl diphosphate = [GlcNAc-(1-&gt;4)-Mur2Ac(oyl-L-Ala-gamma-D-Glu-L-Lys-D-Ala-D-Ala)](n+1)-di-trans,octa-cis-undecaprenyl diphosphate + di-trans,octa-cis-undecaprenyl diphosphate + H(+). It participates in cell wall biogenesis; peptidoglycan biosynthesis. In terms of biological role, peptidoglycan polymerase that catalyzes glycan chain elongation from lipid-linked precursors. The sequence is that of Biosynthetic peptidoglycan transglycosylase from Shewanella frigidimarina (strain NCIMB 400).